A 266-amino-acid polypeptide reads, in one-letter code: tRNA pseudouridine synthase A (266 aa).

The active-site Nucleophile is aspartate 57. Residue tyrosine 115 participates in substrate binding.

Belongs to the tRNA pseudouridine synthase TruA family. Homodimer.

The enzyme catalyses uridine(38/39/40) in tRNA = pseudouridine(38/39/40) in tRNA. Formation of pseudouridine at positions 38, 39 and 40 in the anticodon stem and loop of transfer RNAs. This Buchnera aphidicola subsp. Acyrthosiphon pisum (strain APS) (Acyrthosiphon pisum symbiotic bacterium) protein is tRNA pseudouridine synthase A.